A 294-amino-acid chain; its full sequence is 4-hydroxy-tetrahydrodipicolinate synthase (294 aa).

T45 provides a ligand contact to pyruvate. Y133 (proton donor/acceptor) is an active-site residue. K161 (schiff-base intermediate with substrate) is an active-site residue. I203 is a pyruvate binding site.

It belongs to the DapA family. As to quaternary structure, homotetramer; dimer of dimers.

The protein localises to the cytoplasm. It carries out the reaction L-aspartate 4-semialdehyde + pyruvate = (2S,4S)-4-hydroxy-2,3,4,5-tetrahydrodipicolinate + H2O + H(+). The protein operates within amino-acid biosynthesis; L-lysine biosynthesis via DAP pathway; (S)-tetrahydrodipicolinate from L-aspartate: step 3/4. Catalyzes the condensation of (S)-aspartate-beta-semialdehyde [(S)-ASA] and pyruvate to 4-hydroxy-tetrahydrodipicolinate (HTPA). This is 4-hydroxy-tetrahydrodipicolinate synthase from Shewanella frigidimarina (strain NCIMB 400).